A 441-amino-acid polypeptide reads, in one-letter code: Glutamate-1-semialdehyde 2,1-aminomutase (441 aa).

Residue lysine 273 is modified to N6-(pyridoxal phosphate)lysine.

This sequence belongs to the class-III pyridoxal-phosphate-dependent aminotransferase family. HemL subfamily. Pyridoxal 5'-phosphate serves as cofactor.

The protein localises to the cytoplasm. The enzyme catalyses (S)-4-amino-5-oxopentanoate = 5-aminolevulinate. The protein operates within porphyrin-containing compound metabolism; protoporphyrin-IX biosynthesis; 5-aminolevulinate from L-glutamyl-tRNA(Glu): step 2/2. The chain is Glutamate-1-semialdehyde 2,1-aminomutase from Pyrobaculum calidifontis (strain DSM 21063 / JCM 11548 / VA1).